We begin with the raw amino-acid sequence, 311 residues long: Maspardin (311 aa).

Residues 86–159 form the AB hydrolase-1 domain; sequence EFCDGFRKLL…NSFWLMPSFM (74 aa).

The protein belongs to the AB hydrolase superfamily.

It is found in the cytoplasm. This chain is Maspardin (spg21), found in Danio rerio (Zebrafish).